A 155-amino-acid polypeptide reads, in one-letter code: Trypsin/factor XIIA inhibitor (155 aa).

The first 28 residues, 1–28 (MASSSSSSHRRLILAAAVLLSVLAAASA), serve as a signal peptide directing secretion. Cystine bridges form between Cys-34/Cys-83, Cys-48/Cys-72, Cys-57/Cys-114, Cys-73/Cys-132, and Cys-85/Cys-143. Arg-62 is a catalytic residue. Residues 139 to 155 (GVAECPWILGGGTMPSK) constitute a propeptide, C-terminal peptide.

The protein belongs to the protease inhibitor I6 (cereal trypsin/alpha-amylase inhibitor) family. In terms of assembly, monomer.

It localises to the secreted. Functionally, potent inhibitor of mammalian trypsin and a specific inhibitor of factor XIIa (activated hageman factor). The polypeptide is Trypsin/factor XIIA inhibitor (Zea mays (Maize)).